The sequence spans 806 residues: N-terminal kinase-like protein (806 aa).

Residues 14-314 (FELSPEPPEG…PEDFCRHKVL (301 aa)) enclose the Protein kinase domain. HEAT repeat units follow at residues 350–388 (IIPV…VNTQ), 389–427 (IFPH…LNVE), and 507–545 (ILPV…EDPT). 2 disordered regions span residues 586–642 (RAHP…TADR) and 663–806 (DDWS…RKLD). A compositionally biased stretch (pro residues) spans 601 to 611 (RPVPEGNPAPA). Ser752 bears the Phosphoserine mark. Residues 752 to 762 (SWGEDNWEGLE) show a composition bias toward acidic residues. The stretch at 755-795 (EDNWEGLEAESRQVKAELARKKREERRREMEAKRAEKKTTK) forms a coiled coil. 2 stretches are compositionally biased toward basic and acidic residues: residues 763–773 (AESRQVKAELA) and 780–793 (RRRE…EKKT). Residues 791-806 (KKTTKGPMKLGARKLD) are interaction with COPB1.

The protein belongs to the protein kinase superfamily. Homooligomer. Interacts with GORAB. Interacts with COPA, COPB1 and COPB2. Interacts with AP2B1. Expressed in diaphragm, quadriceps, thymus, liver, lung, spleen, kidney, heart and brain. Prominently expressed in neurons, and enriched at central nervous system synapses and neuromuscular junctions.

The protein localises to the cytoplasm. It localises to the cytoskeleton. Its subcellular location is the microtubule organizing center. It is found in the centrosome. The protein resides in the endoplasmic reticulum-Golgi intermediate compartment. The protein localises to the golgi apparatus. It localises to the cis-Golgi network. In terms of biological role, regulates COPI-mediated retrograde protein traffic at the interface between the Golgi apparatus and the endoplasmic reticulum. Involved in the maintenance of the Golgi apparatus morphology. The sequence is that of N-terminal kinase-like protein (Scyl1) from Mus musculus (Mouse).